Here is a 554-residue protein sequence, read N- to C-terminus: Cytochrome P450 monooxygenase himC (554 aa).

A helical membrane pass occupies residues 52–72 (YSVASVAIAGFTALVVSVALY). 4 N-linked (GlcNAc...) asparagine glycosylation sites follow: asparagine 110, asparagine 328, asparagine 414, and asparagine 425. Heme is bound at residue cysteine 501.

The protein belongs to the cytochrome P450 family. Requires heme as cofactor.

Its subcellular location is the membrane. It participates in secondary metabolite biosynthesis. Cytochrome P450 monooxygenase; part of the him gene cluster that mediates the biosynthesis of himeic acid A, a ubiquitin-activating enzyme (E1) inhibitor. First, himA, together with the trans-enoyl reductase himH, catalyzes the formation of apolyketide chain, which is then condensed with leucine by the NRPS activity of himA. Dieckmann cyclization and release from himA gives a tetramic acid intermediate as the product of himA PKS-NRPS. HimG then catalyzes alpha-oxidation of the tetramic acid ring, with a subsequent rearrangement to yield apyrone intermediate. Two terminal methyl groups of polyketide and amide side chains are oxidized to carboxylic acids by himC cytochrome P450 monooxygenase to form himeic acid A. Himeic acid A is further converted to himeic acid B and C during culture growth. No gene responsible for pyrone to pyridone conversion was found in the him gene cluster and himeic acid A is non-enzymatically converted to himeic acid C by the incorporation of an ammonium nitrogen atom in a pH5 buffer, and to himeic acid B at a conversion ratio of 50% during incubation in MeOH for 5 days. In Aspergillus japonicus, this protein is Cytochrome P450 monooxygenase himC.